The chain runs to 250 residues: MKFEDLLATNKQVQFAHAATQHYKSVKTPDFLEKDPHHKKFHNADGLNQQGSSTPSTATDANAASTASTHTNTTTFKRHIVAVDDISKMNYEMIKNSPGNVITNANQDEIDISTLKTRLYKDNLYAMNDNFLQAVNDQIVTLNAAEQDQETEDPDLSDDEKIDILTKIQENLLEEYQKLSQKERKWFILKELLLDANVELDLFSNRGRKASHPIAFGAVAIPTNVNANSLAFNRTKRRKINKNGLLENIL.

The disordered stretch occupies residues 29 to 70; that stretch reads PDFLEKDPHHKKFHNADGLNQQGSSTPSTATDANAASTASTH. Over residues 52-70 the composition is skewed to low complexity; it reads SSTPSTATDANAASTASTH. Ser157 and Ser211 each carry phosphoserine.

Component of the chromatin-remodeling INO80 complex, at least composed of ARP4, ARP5, ARP8, RVB1, RVB2, TAF14, NHP10, IES1, IES3, IES4, IES6, ACT1, IES2, IES5 and INO80.

The protein resides in the nucleus. Probably involved in transcription regulation via its interaction with the INO80 complex, a chromatin-remodeling complex. This is Ino eighty subunit 3 (IES3) from Saccharomyces cerevisiae (strain ATCC 204508 / S288c) (Baker's yeast).